The sequence spans 636 residues: Dehydrogenase ARMGADRAFT_1018426 (636 aa).

The N-terminal stretch at 1 to 19 is a signal peptide; the sequence is MPALTYLLLAAIGASTVHS. FAD-binding positions include 49-50 and 70-71; these read TA and EG. The N-linked (GlcNAc...) asparagine glycan is linked to N99. FAD is bound by residues W104 and 134-137; that span reads NGLT. N-linked (GlcNAc...) asparagine glycosylation occurs at N253. V280 is a binding site for FAD. N333, N380, N394, and N498 each carry an N-linked (GlcNAc...) asparagine glycan. H570 acts as the Proton acceptor in catalysis. Residues A603 and 614-615 each bind FAD; that span reads PS.

It belongs to the GMC oxidoreductase family. The cofactor is FAD.

It participates in secondary metabolite biosynthesis. Functionally, dehydrogenase, part of the gene cluster that mediates the biosynthesis of melleolides, a range of antifungal and phytotoxic polyketide derivatives composed of an orsellinic acid (OA) moiety esterified to various sesquiterpene alcohols. The first step in melleolides biosynthesis is performed by the delta(6)-protoilludene synthase PRO1 which catalyzes the cyclization of farnesyl diphosphate to protoilludene. The orsellinic acid synthase armB produces OA by condensing acetyl-CoA with 3 malonyl-CoA units in a three-round chain elongation reaction folowed by a C2-C7 ring closure. ArmB further catalyzes the trans-esterification of OA to the various sesquiterpene alcohols resulting from the hydroxylation of protoilludene. The melleolides cluster also includes 5 cytochrome P450 monooxygenases, 4 NAD(+)-dependent oxidoreductases, one flavin-dependent oxidoreductase, and one O-methyltransferase. The cytochrome P450 monooxygenases may be involved in protoilludene hydroxylation to elaborate melleolides with multiple alcohol groups, such as melleolide D, which carries alcohol functionalities at C-4, C-5, C-10, and C-13. The role of the NAD(+)-dependent enzymes remains unknown. Numerous melleolides, including arnamial, show 5'-O-methylation of the aromatic moiety which may be catalyzed by the methyltransferase encoded in the cluster. The flavin-dependent oxidoreductase might represent the dehydrogenase yielding the aldehyde in position 1 of arnamial and other melleolides. Finally, several halogenase localized outside of the cluster, are able to catalyze the transfer of a single chlorine atom to the melleolide backbone, resulting in a 6'-chloromelleolide product. The protein is Dehydrogenase ARMGADRAFT_1018426 of Armillaria gallica (Bulbous honey fungus).